A 361-amino-acid chain; its full sequence is Caveolae-associated protein 4 (361 aa).

Residues 1-21 (MEHNGSASNADKIHQNRLSNV) are disordered. A coiled-coil region spans residues 100-124 (IKDVKARVEKQQTHVKKVEAKQEEI). Residues Ser-152, Ser-171, and Ser-172 each carry the phosphoserine modification. Positions 204–248 (ENMQKTRQNFDKKVNRIRTRIVTPERRERLRQSGERLRQSGERLK) form a coiled coil. Basic and acidic residues predominate over residues 230 to 255 (RERLRQSGERLRQSGERLKQSGERFK). Disordered stretches follow at residues 230–283 (RERL…AVAE) and 310–346 (PEAL…FKPQ). A Phosphothreonine modification is found at Thr-335. Ser-354 is subject to Phosphoserine.

Belongs to the CAVIN family. In terms of assembly, component of the CAVIN complex composed of CAVIN1, CAVIN2, CAVIN3 and CAVIN4. Interacts with CAVIN1, ADRA1A, ADRA1B, MAPK1 and MAPK3. Interacts with CAVIN2; this augments the transactivation of NPPA.

The protein resides in the cytoplasm. The protein localises to the myofibril. It localises to the sarcomere. Its subcellular location is the cytosol. It is found in the cell membrane. The protein resides in the sarcolemma. The protein localises to the membrane. It localises to the caveola. Its function is as follows. Modulates the morphology of formed caveolae in cardiomyocytes, but is not required for caveolar formation. Facilitates the recruitment of MAPK1/3 to caveolae within cardiomyocytes and regulates alpha-1 adrenergic receptor-induced hypertrophic responses in cardiomyocytes through MAPK1/3 activation. Contributes to proper membrane localization and stabilization of caveolin-3 (CAV3) in cardiomyocytes. Induces RHOA activation and activates NPPA transcription and myofibrillar organization through the Rho/ROCK signaling pathway. The polypeptide is Caveolae-associated protein 4 (CAVIN4) (Bos taurus (Bovine)).